We begin with the raw amino-acid sequence, 221 residues long: Phosphoenolpyruvate guanylyltransferase (221 aa).

Positions 154, 169, and 172 each coordinate phosphoenolpyruvate.

Belongs to the CofC family.

The enzyme catalyses phosphoenolpyruvate + GTP + H(+) = enolpyruvoyl-2-diphospho-5'-guanosine + diphosphate. It participates in cofactor biosynthesis; coenzyme F420 biosynthesis. Functionally, guanylyltransferase that catalyzes the activation of phosphoenolpyruvate (PEP) as enolpyruvoyl-2-diphospho-5'-guanosine, via the condensation of PEP with GTP. It is involved in the biosynthesis of coenzyme F420, a hydride carrier cofactor. This is Phosphoenolpyruvate guanylyltransferase from Mycolicibacterium smegmatis (strain ATCC 700084 / mc(2)155) (Mycobacterium smegmatis).